We begin with the raw amino-acid sequence, 234 residues long: Glucosamine-6-phosphate deaminase (234 aa).

Asp62 serves as the catalytic Proton acceptor; for enolization step. Asn128 acts as the For ring-opening step in catalysis. His130 acts as the Proton acceptor; for ring-opening step in catalysis. The For ring-opening step role is filled by Glu135.

The protein belongs to the glucosamine/galactosamine-6-phosphate isomerase family. NagB subfamily.

It carries out the reaction alpha-D-glucosamine 6-phosphate + H2O = beta-D-fructose 6-phosphate + NH4(+). It functions in the pathway amino-sugar metabolism; N-acetylneuraminate degradation; D-fructose 6-phosphate from N-acetylneuraminate: step 5/5. Functionally, catalyzes the reversible isomerization-deamination of glucosamine 6-phosphate (GlcN6P) to form fructose 6-phosphate (Fru6P) and ammonium ion. This is Glucosamine-6-phosphate deaminase from Streptococcus pyogenes serotype M1.